A 629-amino-acid polypeptide reads, in one-letter code: MFYQDPFDVIIIGGGHAGTEAAMAAARMGQQTLLLTHNIDTLGQMSCNPAIGGIGKGHLVKEVDALGGLMAKAIDQAGIQFRILNASKGPAVRATRAQADRVLYRQAVRTALENQPNLMIFQQAVEDLIVENDRVVGAVTQMGLKFRAKAVVLTVGTFLDGKIHIGLDNYSGGRAGDPPSIPLSRRLRELPLRVSRLKTGTPPRIDARTIDFSVLAQQHGDNPMPVFSFMGSADQHPRQVPCYITHTNEKTHDVIRNNLDRSPMYAGVIEGIGPRYCPSIEDKVMRFADRNQHQIFLEPEGLTSNEIYPNGISTSLPFDVQMQIVRSMQGMENARIVRPGYAIEYDFFDPRDLKPTLESKFIQGLFFAGQINGTTGYEEAAAQGLLAGLNAARFSAEKEGWAPRRDQAYLGVLVDDLCTLGTKEPYRMFTSRAEYRLMLREDNADLRLTEQGRELGLVDDERWARYNEKLESIERERQRLKSTWVNPQAESANEVNAHLTAPLSREASGEDLLRRPEMTYEQLVQLSPFTPGLEDRQAAEQVEIQVKYEGYIARQQDEIEKQQRNENTLLPATLDYRQVTGLSNEVIAKLNDHKPSSIGQASRISGITPAAISILLVWLKKQGMLRRSA.

FAD is bound by residues 13 to 18, V125, and S180; that span reads GGGHAG. 273–287 contacts NAD(+); the sequence is GPRYCPSIEDKVMRF. Q370 contributes to the FAD binding site.

Belongs to the MnmG family. Homodimer. Heterotetramer of two MnmE and two MnmG subunits. FAD serves as cofactor.

It localises to the cytoplasm. In terms of biological role, NAD-binding protein involved in the addition of a carboxymethylaminomethyl (cmnm) group at the wobble position (U34) of certain tRNAs, forming tRNA-cmnm(5)s(2)U34. The sequence is that of tRNA uridine 5-carboxymethylaminomethyl modification enzyme MnmG from Klebsiella pneumoniae subsp. pneumoniae (strain ATCC 700721 / MGH 78578).